A 96-amino-acid polypeptide reads, in one-letter code: Co-chaperonin GroES (96 aa).

It belongs to the GroES chaperonin family. As to quaternary structure, heptamer of 7 subunits arranged in a ring. Interacts with the chaperonin GroEL.

It localises to the cytoplasm. Functionally, together with the chaperonin GroEL, plays an essential role in assisting protein folding. The GroEL-GroES system forms a nano-cage that allows encapsulation of the non-native substrate proteins and provides a physical environment optimized to promote and accelerate protein folding. GroES binds to the apical surface of the GroEL ring, thereby capping the opening of the GroEL channel. The chain is Co-chaperonin GroES from Methylobacillus flagellatus (strain ATCC 51484 / DSM 6875 / VKM B-1610 / KT).